The following is a 60-amino-acid chain: Large ribosomal subunit protein uL30 (60 aa).

The protein belongs to the universal ribosomal protein uL30 family. Part of the 50S ribosomal subunit.

The protein is Large ribosomal subunit protein uL30 of Acidovorax ebreus (strain TPSY) (Diaphorobacter sp. (strain TPSY)).